The primary structure comprises 115 residues: MSTTIEKIQRQIAENPILLYMKGSPKLPSCGFSAQAVQALAACGERFAYVDILQNPDIRAELPKYANWPTFPQLWVDGELVGGCDIVIEMYQRGELQQLIKETAAKYKSEEPDAE.

Positions 5 to 107 (IEKIQRQIAE…QLIKETAAKY (103 aa)) constitute a Glutaredoxin domain. A glutathione-binding site is contributed by lysine 22. Cysteine 30 contributes to the [2Fe-2S] cluster binding site. Residues arginine 59, phenylalanine 71, and 84-85 (CD) contribute to the glutathione site.

The protein belongs to the glutaredoxin family. Monothiol subfamily. Homodimer.

It localises to the cytoplasm. Its function is as follows. Monothiol glutaredoxin involved in the biogenesis of iron-sulfur clusters. This chain is Glutaredoxin 4 (grxD), found in Shigella flexneri.